Reading from the N-terminus, the 225-residue chain is Phosphoserine phosphatase (225 aa).

Met-1 bears the N-acetylmethionine mark. Catalysis depends on Asp-20, which acts as the Nucleophile. Positions 20 and 22 each coordinate Mg(2+). Residue 20 to 22 (DVD) participates in L-serine binding. The active-site Proton donor is Asp-22. Met-52 provides a ligand contact to O-phospho-L-serine. Residue Gly-53 coordinates phosphate. Residues 109–111 (SGG) and Lys-158 each bind L-serine. O-phospho-L-serine contacts are provided by residues 109-111 (SGG) and Lys-158. Position 179 (Asp-179) interacts with Mg(2+). An O-phospho-L-serine-binding site is contributed by Thr-182. Residue Thr-182 participates in phosphate binding.

This sequence belongs to the HAD-like hydrolase superfamily. SerB family. In terms of assembly, homodimer. Mg(2+) serves as cofactor.

The protein localises to the cytoplasm. The protein resides in the cytosol. It carries out the reaction O-phospho-L-serine + H2O = L-serine + phosphate. The catalysed reaction is O-phospho-D-serine + H2O = D-serine + phosphate. It functions in the pathway amino-acid biosynthesis; L-serine biosynthesis; L-serine from 3-phospho-D-glycerate: step 3/3. In terms of biological role, catalyzes the last irreversible step in the biosynthesis of L-serine from carbohydrates, the dephosphorylation of O-phospho-L-serine to L-serine. L-serine can then be used in protein synthesis, to produce other amino acids, in nucleotide metabolism or in glutathione synthesis, or can be racemized to D-serine, a neuromodulator. May also act on O-phospho-D-serine. The chain is Phosphoserine phosphatase from Rattus norvegicus (Rat).